Here is a 413-residue protein sequence, read N- to C-terminus: Lamin tail domain-containing protein 1 (413 aa).

Disordered stretches follow at residues 1–25 and 102–128; these read MMKE…VQDG and HKDS…SDVD. A compositionally biased stretch (polar residues) spans 107–128; that stretch reads LGKQSTSSMVPRRQPQSSSDVD. Residues 169–287 form the LTD domain; it reads EVGQFTSSSL…EAIAWYTPIH (119 aa). The disordered stretch occupies residues 356–413; that stretch reads LPNKSPWCRNPNTSPHPYSSLIDSHDSDISESSLDTQLKPQPTKPKPDPGTKKKKAKS. The segment covering 385-396 has biased composition (low complexity); that stretch reads SESSLDTQLKPQ.

The protein belongs to the intermediate filament family.

This is Lamin tail domain-containing protein 1 (Lmntd1) from Mus musculus (Mouse).